The following is a 66-amino-acid chain: Panusin (66 aa).

The N-terminal stretch at 1–22 is a signal peptide; sequence MKTKAVLMLMLLVLVAATLVQG. The propeptide occupies 23 to 26; that stretch reads EPEP. 3 cysteine pairs are disulfide-bonded: cysteine 32–cysteine 54, cysteine 39–cysteine 61, and cysteine 44–cysteine 60. Tyrosine 65 is subject to Tyrosine amide.

In terms of assembly, forms dimers and higher-order oligomers. Contains 3 disulfide bonds.

Its function is as follows. Antimicrobial peptide. Has antibacterial activity against Gram-positive bacteria S.aureus ATCC 29737 and B.subtilis ATCC 6633 as well as against Gram-negative bacteria E.coli ATCC 10536 and K.pneumoniae ATCC 10031. The chain is Panusin from Panulirus argus (Caribbean spiny lobster).